The sequence spans 262 residues: Small ribosomal subunit protein uS2 (262 aa).

It belongs to the universal ribosomal protein uS2 family.

The polypeptide is Small ribosomal subunit protein uS2 (Azobacteroides pseudotrichonymphae genomovar. CFP2).